The following is an 864-amino-acid chain: 3-O-alpha-D-mannopyranosyl-alpha-D-mannopyranose xylosylphosphotransferase (864 aa).

Residues 1-66 are disordered; the sequence is MPSTALSPPS…VPPRSPSRKI (66 aa). Topologically, residues 1 to 82 are cytoplasmic; sequence MPSTALSPPS…HIRPHITPRT (82 aa). 2 stretches are compositionally biased toward low complexity: residues 16–29 and 42–52; these read SYDSYSSSLSPSSP and SPSPSRLESLL. A helical transmembrane segment spans residues 83–103; the sequence is LTPVFLWTLALWLIHHFLFPL. The Lumenal portion of the chain corresponds to 104-864; sequence SSPFAKLAKP…WDPVKDRYND (761 aa). 3 N-linked (GlcNAc...) asparagine glycosylation sites follow: Asn-200, Asn-301, and Asn-583.

It belongs to the XPT1 family. Requires Mn(2+) as cofactor.

It localises to the golgi apparatus membrane. It catalyses the reaction 3-alpha-D-mannopyranosyl-alpha-D-mannopyranose + UDP-alpha-D-xylose = 3-O-(6-O-alpha-D-xylosylphospho-alpha-D-mannopyranosyl)-alpha-D-mannopyranose + UMP + H(+). In terms of biological role, xylosylphosphotransferase that is specific for UDP-xylose as a donor and mannose as an acceptor to form a xylose-alpha-1-phosphate-6-mannose linkage. Functions in the O-glycosylation of proteins en route through the secretory pathway. This Cryptococcus neoformans var. grubii (Filobasidiella neoformans var. grubii) protein is 3-O-alpha-D-mannopyranosyl-alpha-D-mannopyranose xylosylphosphotransferase (XPT1).